The primary structure comprises 101 residues: NAD(P)H-quinone oxidoreductase subunit 4L, chloroplastic (101 aa).

2 helical membrane-spanning segments follow: residues 2 to 22 and 61 to 81; these read MFEHVLVLSVYLFSIGIYGLI and IFSIFVIAVAAAEAAIGLAIV.

Belongs to the complex I subunit 4L family. As to quaternary structure, NDH is composed of at least 16 different subunits, 5 of which are encoded in the nucleus.

The protein resides in the plastid. It localises to the chloroplast thylakoid membrane. The enzyme catalyses a plastoquinone + NADH + (n+1) H(+)(in) = a plastoquinol + NAD(+) + n H(+)(out). It carries out the reaction a plastoquinone + NADPH + (n+1) H(+)(in) = a plastoquinol + NADP(+) + n H(+)(out). NDH shuttles electrons from NAD(P)H:plastoquinone, via FMN and iron-sulfur (Fe-S) centers, to quinones in the photosynthetic chain and possibly in a chloroplast respiratory chain. The immediate electron acceptor for the enzyme in this species is believed to be plastoquinone. Couples the redox reaction to proton translocation, and thus conserves the redox energy in a proton gradient. The sequence is that of NAD(P)H-quinone oxidoreductase subunit 4L, chloroplastic from Dioscorea elephantipes (Elephant's foot yam).